A 425-amino-acid polypeptide reads, in one-letter code: Serine--tRNA ligase (425 aa).

L-serine is bound at residue 233-235 (TAE). 264-266 (RAE) contributes to the ATP binding site. L-serine is bound at residue Glu287. 351–354 (EISS) is an ATP binding site. Ser387 contacts L-serine.

Belongs to the class-II aminoacyl-tRNA synthetase family. Type-1 seryl-tRNA synthetase subfamily. Homodimer. The tRNA molecule binds across the dimer.

The protein resides in the cytoplasm. It carries out the reaction tRNA(Ser) + L-serine + ATP = L-seryl-tRNA(Ser) + AMP + diphosphate + H(+). It catalyses the reaction tRNA(Sec) + L-serine + ATP = L-seryl-tRNA(Sec) + AMP + diphosphate + H(+). Its pathway is aminoacyl-tRNA biosynthesis; selenocysteinyl-tRNA(Sec) biosynthesis; L-seryl-tRNA(Sec) from L-serine and tRNA(Sec): step 1/1. Its function is as follows. Catalyzes the attachment of serine to tRNA(Ser). Is also able to aminoacylate tRNA(Sec) with serine, to form the misacylated tRNA L-seryl-tRNA(Sec), which will be further converted into selenocysteinyl-tRNA(Sec). The polypeptide is Serine--tRNA ligase (Clostridium perfringens (strain ATCC 13124 / DSM 756 / JCM 1290 / NCIMB 6125 / NCTC 8237 / Type A)).